We begin with the raw amino-acid sequence, 660 residues long: E3 ubiquitin-protein ligase ORTHRUS 3 (660 aa).

Residues 12 to 63 form a PHD-type zinc finger; that stretch reads EGVCMRCKSMPPPEESLTCGTCVTPWHVSCLLSPPETLSATLQWLCPDCSGE. The tract at residues 107–129 is disordered; the sequence is QLLSGKGVVDEDDEEEKKKTSKG. The RING-type 1 zinc-finger motif lies at 141–197; that stretch reads CSFCMQSLQKPVSVRVLFALALMLVWFLESTPCGHNACLKCFLKWMGQGHRSCGTCR. One can recognise a YDG domain in the interval 285-434; sequence VRNQGLLVGE…CRFLFVRCDN (150 aa). Residues 528–585 form an RING-type 2 zinc finger; it reads CQICQKVMTNPVTTPCAHNFCKACLESKFAGTALVRERGSGGRKLRSQKSVMKCPCCP. A coiled-coil region spans residues 593–622; it reads QNPQVNREVAEVIEKLKKQEEEENAKSLDE. 2 stretches are compositionally biased toward basic and acidic residues: residues 610–621 and 637–646; these read KQEEEENAKSLD and QPKKRIKLDT. Residues 610–660 are disordered; the sequence is KQEEEENAKSLDEGQCSGTSHEEEDDEQPKKRIKLDTDAEVSATVVESDMK.

It is found in the nucleus. The enzyme catalyses S-ubiquitinyl-[E2 ubiquitin-conjugating enzyme]-L-cysteine + [acceptor protein]-L-lysine = [E2 ubiquitin-conjugating enzyme]-L-cysteine + N(6)-ubiquitinyl-[acceptor protein]-L-lysine.. It functions in the pathway protein modification; protein ubiquitination. Functionally, E3 ubiquitin-protein ligase. May participate in CpG methylation-dependent transcriptional regulation. The polypeptide is E3 ubiquitin-protein ligase ORTHRUS 3 (ORTH3) (Arabidopsis thaliana (Mouse-ear cress)).